The chain runs to 373 residues: uncharacterized protein (373 aa).

This is an uncharacterized protein from Saccharomyces cerevisiae (strain ATCC 204508 / S288c) (Baker's yeast).